Consider the following 473-residue polypeptide: Lactate utilization protein B (473 aa).

4Fe-4S ferredoxin-type domains follow at residues 302-332 and 351-380; these read GSEF…GHSY and YDDY…LHDL. Positions 311, 314, 317, 321, 364, 367, and 371 each coordinate [4Fe-4S] cluster.

Belongs to the LutB/YkgF family.

Functionally, is involved in L-lactate degradation and allows cells to grow with lactate as the sole carbon source. Has probably a role as an electron transporter during oxidation of L-lactate. The sequence is that of Lactate utilization protein B from Bacillus cytotoxicus (strain DSM 22905 / CIP 110041 / 391-98 / NVH 391-98).